Reading from the N-terminus, the 161-residue chain is Large ribosomal subunit protein uL11 (161 aa).

The protein belongs to the universal ribosomal protein uL11 family. In terms of assembly, part of the ribosomal stalk of the 50S ribosomal subunit. Interacts with L10 and the large rRNA to form the base of the stalk. L10 forms an elongated spine to which L12 dimers bind in a sequential fashion forming a multimeric L10(L12)X complex.

In terms of biological role, forms part of the ribosomal stalk which helps the ribosome interact with GTP-bound translation factors. The protein is Large ribosomal subunit protein uL11 of Methanosarcina barkeri (strain Fusaro / DSM 804).